The chain runs to 184 residues: Protein N-terminal glutamine amidohydrolase (184 aa).

Catalysis depends on residues C14, H63, and D78.

This sequence belongs to the NTAQ1 family. In terms of assembly, monomer.

It catalyses the reaction N-terminal L-glutaminyl-[protein] + H2O = N-terminal L-glutamyl-[protein] + NH4(+). In terms of biological role, mediates the side-chain deamidation of N-terminal glutamine residues to glutamate, an important step in N-end rule pathway of protein degradation. Conversion of the resulting N-terminal glutamine to glutamate renders the protein susceptible to arginylation, polyubiquitination and degradation as specified by the N-end rule. Does not act on substrates with internal or C-terminal glutamine and does not act on non-glutamine residues in any position. In Caenorhabditis elegans, this protein is Protein N-terminal glutamine amidohydrolase.